Here is a 119-residue protein sequence, read N- to C-terminus: Beta-2-microglobulin (119 aa).

The first 20 residues, 1–20, serve as a signal peptide directing secretion; sequence MGRFVAVALLVLLSLSGLET. An Ig-like C1-type domain is found at 25-114; it reads PKIQVYSRHP…VTFSTPKTVK (90 aa). Cysteines 45 and 100 form a disulfide.

It belongs to the beta-2-microglobulin family. Heterodimer of an alpha chain and a beta chain. Beta-2-microglobulin is the beta-chain of major histocompatibility complex class I molecules.

The protein resides in the secreted. Component of the class I major histocompatibility complex (MHC). Involved in the presentation of peptide antigens to the immune system. The polypeptide is Beta-2-microglobulin (B2M) (Callicebus personatus nigrifrons (Black-fronted titi)).